Here is a 248-residue protein sequence, read N- to C-terminus: UPF0736 protein BCAH187_A1335 (248 aa).

It belongs to the UPF0736 family.

The sequence is that of UPF0736 protein BCAH187_A1335 from Bacillus cereus (strain AH187).